The chain runs to 668 residues: MGNSKQIKRSLTGSILLKKQISQIFFKKLESIFGIALAEDTSDRLMDYLNKSIDYLLDHSVIEGLFSIEIEESKLKSTIESIESTLITDFSLTTDPCYVASTFILYFSKLPNLLLSKISSQLIHSVEISHEEYRINVIRSLLYSLPLQNRNILKMVLHFLKKFSLACNNNNNNNSENNNTIVEDIEVQSAYNRFTKAFMSTTPGNFEISCKAIRLMVMDIDEFDKLPQDIQYMVKDGESIVKAATFDRLVEKLFDLSYGFKDPDYNYTVFHTYDYYTTSVELLGKIVHYYRIACTLTTKLQMEVSITILSVAMFWMKIHHNHLMTDLQFLQKLKIFLDSVPQVPPTQVTYFTYFQTFFKPVIEPLKPLYERGNSFLGPNLTQSSGTSKKKNQLIEKMMINNNINNNNNINNNVNSNSNNNFNNNIDIDIYNIGSNIIAQQITIIDNEMLMAIPPSQFLHKSFSKESKSPQFHDMVSKFNEWARWTSSEILSKEKLVERVVTLSFFIDLAKSCVELGNYNAANAIVGGLNHSSISRLKLTWERLSTKVTQDYDRLLSLFDLSMNYKNYRDEIKSTKAKIIPYLGLFPKDLIAIEEGNDNFTNNNLINTEKFRLLYQTIKKIQSYQQPLFTFKTSEPIKQYLKNISNGLSEEKDFHSISHKLEPRQQQTQ.

The Rho-GAP domain maps to 27–224; sequence KKLESIFGIA…LMVMDIDEFD (198 aa). The 126-residue stretch at 237 to 362 folds into the N-terminal Ras-GEF domain; that stretch reads GESIVKAATF…YFQTFFKPVI (126 aa). In terms of domain architecture, Ras-GEF spans 433–663; it reads GSNIIAQQIT…HSISHKLEPR (231 aa).

Functionally, promotes the exchange of Ras-bound GDP by GTP. This is Ras guanine nucleotide exchange factor D (gefD) from Dictyostelium discoideum (Social amoeba).